Here is a 341-residue protein sequence, read N- to C-terminus: UDP-3-O-acylglucosamine N-acyltransferase (341 aa).

H237 serves as the catalytic Proton acceptor.

This sequence belongs to the transferase hexapeptide repeat family. LpxD subfamily. Homotrimer.

The catalysed reaction is a UDP-3-O-[(3R)-3-hydroxyacyl]-alpha-D-glucosamine + a (3R)-hydroxyacyl-[ACP] = a UDP-2-N,3-O-bis[(3R)-3-hydroxyacyl]-alpha-D-glucosamine + holo-[ACP] + H(+). Its pathway is bacterial outer membrane biogenesis; LPS lipid A biosynthesis. Catalyzes the N-acylation of UDP-3-O-acylglucosamine using 3-hydroxyacyl-ACP as the acyl donor. Is involved in the biosynthesis of lipid A, a phosphorylated glycolipid that anchors the lipopolysaccharide to the outer membrane of the cell. The chain is UDP-3-O-acylglucosamine N-acyltransferase from Azoarcus sp. (strain BH72).